The sequence spans 360 residues: Probable neutral protease 2 homolog A (360 aa).

The N-terminal stretch at 1–17 is a signal peptide; sequence MQFTALLAALGAPLALA. A propeptide spanning residues 18-183 is cleaved from the precursor; the sequence is ASIPAAAHNH…DDSTGVIDKR (166 aa). Disulfide bonds link Cys191-Cys262, Cys269-Cys287, and Cys300-Cys360. N-linked (GlcNAc...) asparagine glycosylation is present at Asn205. His311 serves as a coordination point for Zn(2+). Glu312 is an active-site residue. Positions 315 and 326 each coordinate Zn(2+).

This sequence belongs to the peptidase M35 family. Zn(2+) is required as a cofactor.

The protein resides in the secreted. The catalysed reaction is Preferential cleavage of bonds with hydrophobic residues in P1'. Also 3-Asn-|-Gln-4 and 8-Gly-|-Ser-9 bonds in insulin B chain.. Its function is as follows. Probable secreted metalloprotease that shows high activities on basic nuclear substrates such as histone and protamine. May be involved in virulence. The protein is Probable neutral protease 2 homolog A (NpII-A) of Trichophyton rubrum (Athlete's foot fungus).